Consider the following 297-residue polypeptide: Band 7 protein AAEL010189 (297 aa).

Residues 1–13 (MGVVESITNSTKP) are compositionally biased toward polar residues. The segment at 1–30 (MGVVESITNSTKPGVTKKSSPEAEDDSNGE) is disordered. The chain crosses the membrane as a helical span at residues 37-57 (ILIFLSWVLVVLTMPFSLLVC).

This sequence belongs to the band 7/mec-2 family.

Its subcellular location is the membrane. This is Band 7 protein AAEL010189 from Aedes aegypti (Yellowfever mosquito).